The chain runs to 1116 residues: DUB-associated factor 1 (1116 aa).

7 WD repeats span residues 21–62 (AHIL…NEPE), 91–132 (KNSD…DHDD), 160–200 (VHDG…EKMA), 219–262 (SMSP…EVIR), 266–305 (AHRT…DQTT), 387–426 (KKYG…FSVN), and 428–466 (GGFA…LLNT). The disordered stretch occupies residues 578–600 (LDTGYNSESKKNNKDKKRKSTFK). S668 carries the phosphoserine modification. T693 carries the phosphothreonine modification. Positions 747 to 776 (ISSQDLPSNNTHNKLRSSENSRANSTSTLE) are enriched in polar residues. Disordered stretches follow at residues 747–784 (ISSQ…KKPE) and 963–994 (FISA…PSTQ). The span at 967–987 (SDTTESSGNDSSDSSLGNGNE) shows a compositional bias: low complexity.

In terms of assembly, interacts (via its WD repeats) with ubiquitin.

It localises to the cytoplasm. Its function is as follows. Ubiquitin-binding protein involved in the resistance to phenanthroline, sanguinarine, nordihydroguaiaretic acid (NDGA), isopropyl (N-3-chloro-phenyl)-carbamate (IPCPC) and guanosine 5'-O-(2-thiodiphosphate). The chain is DUB-associated factor 1 from Saccharomyces cerevisiae (strain ATCC 204508 / S288c) (Baker's yeast).